Consider the following 243-residue polypeptide: Tegument protein UL14 homolog (243 aa).

The protein belongs to the alphaherpesvirinae HHV-1 UL14 protein family. In terms of processing, phosphorylated.

It is found in the virion tegument. The protein resides in the host cytoplasm. The protein localises to the host nucleus. In terms of biological role, contributes to the nuclear transport of the viral transcriptional activator VP16 homolog during the early phase of infection. Therefore, participates indirectly in the regulation of the immediate-early gene expression. Additionally, seems to be important for efficient nuclear targeting of capsids. In Gallid herpesvirus 2 (strain Chicken/Md5/ATCC VR-987) (GaHV-2), this protein is Tegument protein UL14 homolog (MDV026).